Reading from the N-terminus, the 95-residue chain is CRISPR-associated endoribonuclease Cas2 1 (95 aa).

Mg(2+) is bound at residue Asp8.

It belongs to the CRISPR-associated endoribonuclease Cas2 protein family. As to quaternary structure, homodimer, forms a heterotetramer with a Cas1 homodimer. Requires Mg(2+) as cofactor.

In terms of biological role, CRISPR (clustered regularly interspaced short palindromic repeat), is an adaptive immune system that provides protection against mobile genetic elements (viruses, transposable elements and conjugative plasmids). CRISPR clusters contain sequences complementary to antecedent mobile elements and target invading nucleic acids. CRISPR clusters are transcribed and processed into CRISPR RNA (crRNA). Functions as a ssRNA-specific endoribonuclease. Involved in the integration of spacer DNA into the CRISPR cassette. The protein is CRISPR-associated endoribonuclease Cas2 1 of Pyrobaculum aerophilum (strain ATCC 51768 / DSM 7523 / JCM 9630 / CIP 104966 / NBRC 100827 / IM2).